A 585-amino-acid chain; its full sequence is Mitochondrial sodium/calcium exchanger protein (585 aa).

Residues 1-26 (MAGRWLDPLWAPGFLCVALILETASG) form the signal peptide. Residues 27–95 (AGDLSTKAHG…GIFCYFPPNL (69 aa)) are Extracellular-facing. N-linked (GlcNAc...) asparagine glycosylation occurs at N46. The helical transmembrane segment at 96–116 (LPLAITLYVFWLLYLFLILGV) threads the bilayer. Residues 117–140 (TAAKFFCPNLSAISTSLKLSHNVA) lie on the Cytoplasmic side of the membrane. Residues 141 to 161 (GVTFLAFGNGAPDIFSALVAF) traverse the membrane as a helical segment. Residues 162-168 (SDPRTAG) lie on the Extracellular side of the membrane. The chain crosses the membrane as a helical span at residues 169–189 (LAIGALFGAGVLVTTVVAGGI). Topologically, residues 190–205 (TILRPFMAASRPFLRD) are cytoplasmic. The helical transmembrane segment at 206-226 (ITFYMVAVFLTFTALYLGRIT) threads the bilayer. L227 is a topological domain (extracellular). A helical membrane pass occupies residues 228-247 (VWALGYLGLYVFYVVTVIIC). Topologically, residues 248 to 325 (TWVYQRQRSR…KWRTQSISCK (78 aa)) are cytoplasmic. S258 carries the post-translational modification Phosphoserine; by PKA. Residues 326–346 (LLKVAKLPVEFLLLLTVPVVD) traverse the membrane as a helical segment. The Extracellular segment spans residues 347–360 (PDKDDRNWKRPLNC). A helical membrane pass occupies residues 361-381 (LQLVISPLVLVLTLQSGVYGI). Residues 382 to 383 (YE) are Cytoplasmic-facing. The chain crosses the membrane as a helical span at residues 384-404 (IGGLLPVWAVVVIVGTALASV). The Extracellular segment spans residues 405–416 (TFFATSNSEPPR). A helical membrane pass occupies residues 417–437 (LHWLFAFLGFLTSALWINAAA). The Cytoplasmic segment spans residues 438-445 (TEVVNILR). A helical transmembrane segment spans residues 446–466 (SLGVVFRLSNTVLGLTLLAWG). At 467 to 491 (NSIGDAFSDFTLARQGYPRMAFSAC) the chain is on the extracellular side. A helical membrane pass occupies residues 492-512 (FGGIIFNILVGVGLGCLLQIV). At 513-525 (RSHASEVKLEPDG) the chain is on the cytoplasmic side. A helical transmembrane segment spans residues 526 to 546 (LLVWVLASALGLSLVFSLVSV). Over 547-559 (PLQCFQLSKAYGL) the chain is Extracellular. A helical transmembrane segment spans residues 560–580 (CLLLFYICFIVVVLLTEFGVI). The Cytoplasmic portion of the chain corresponds to 581–585 (HLKAD).

The protein belongs to the Ca(2+):cation antiporter (CaCA) (TC 2.A.19) family. SLC24A subfamily. Post-translationally, phosphorylation at Ser-258 by PKA prevents calcium overload. Widely expressed. Present at higher level in pancreas, stomach, skeletal muscle and skin (at protein level). Ubiquitously expressed.

The protein localises to the mitochondrion inner membrane. The catalysed reaction is Ca(2+)(in) + 3 Na(+)(out) = Ca(2+)(out) + 3 Na(+)(in). The enzyme catalyses 3 Li(+)(out) + Ca(2+)(in) = 3 Li(+)(in) + Ca(2+)(out). Inhibited by the sodium/calcium exchanger inhibitor CGP-37157. Strongly inhibited by zinc. Mitochondrial sodium/calcium antiporter that mediates sodium-dependent calcium efflux from mitochondrion, by mediating the exchange of 3 sodium ions per 1 calcium ion. Plays a central role in mitochondrial calcium homeostasis by mediating mitochondrial calcium extrusion: calcium efflux is essential for mitochondrial function and cell survival, notably in cardiomyocytes. Regulates rates of glucose-dependent insulin secretion in pancreatic beta-cells during the first phase of insulin secretion: acts by mediating efflux of calcium from mitochondrion, thereby affecting cytoplasmic calcium responses. Required for store-operated Ca(2+) entry (SOCE) and Ca(2+) release-activated Ca(2+) (CRAC) channel regulation: sodium transport by SLC8B1 leads to promote calcium-shuttling that modulates mitochondrial redox status, thereby regulating SOCE activity. Involved in B-lymphocyte chemotaxis. Able to transport Ca(2+) in exchange of either Li(+) or Na(+), explaining how Li(+) catalyzes Ca(2+) exchange. In contrast to other members of the family its function is independent of K(+). This chain is Mitochondrial sodium/calcium exchanger protein, found in Rattus norvegicus (Rat).